A 641-amino-acid polypeptide reads, in one-letter code: YAP1-binding protein 2 (641 aa).

This sequence belongs to the YBP1 family.

It localises to the cytoplasm. Its function is as follows. Involved in oxidative stress response and redox homeostasis. Required for hydrogen peroxide-induced activation of YAP1. Acts in a parallele pathway to YBP1. In Saccharomyces cerevisiae (strain ATCC 204508 / S288c) (Baker's yeast), this protein is YAP1-binding protein 2.